A 452-amino-acid polypeptide reads, in one-letter code: cAMP-dependent protein kinase regulatory subunit (452 aa).

The dimerization and phosphorylation stretch occupies residues 28–212 (QFCANYFNSK…ELSKTLGSNF (185 aa)). Residues 74–163 (IMTTNKRQPS…APPVPKSKIP (90 aa)) form a disordered region. The segment covering 75 to 84 (MTTNKRQPSF) has biased composition (polar residues). Positions 95–106 (SIDHHHDDDPKE) are enriched in basic and acidic residues. A Phosphoserine modification is found at Ser173. Residues 213-330 (LFRQ…FLKD) and 333-451 (VLSS…QGSS) contribute to the a nucleoside 3',5'-cyclic phosphate site. Residues Glu278, Arg287, Glu399, and Arg408 each contribute to the 3',5'-cyclic AMP site.

It belongs to the cAMP-dependent kinase regulatory chain family. In terms of assembly, tetramer, composed of 2 regulatory (R) and 2 catalytic (C) subunits. In the presence of cAMP it dissociates into 2 active monomeric C subunits and an R dimer.

The protein is cAMP-dependent protein kinase regulatory subunit (PKAR) of Debaryomyces hansenii (strain ATCC 36239 / CBS 767 / BCRC 21394 / JCM 1990 / NBRC 0083 / IGC 2968) (Yeast).